Here is a 576-residue protein sequence, read N- to C-terminus: RNA-binding post-transcriptional regulator cip2 (576 aa).

One can recognise an RRM domain in the interval 232–310 (TAIVIKNIPF…RRLRVEWKRQ (79 aa)). An R3H domain is found at 355-420 (DPAILNVYSH…AKQVVITMPS (66 aa)).

In terms of assembly, interacts with csx1. Phosphorylated by sty1.

It is found in the cytoplasm. In terms of biological role, regulates global gene expression after oxidative stress. Interacts and stabilizes mRNAs and may regulate their transition between different cytoplasmic components after oxidative stress. The chain is RNA-binding post-transcriptional regulator cip2 (cip2) from Schizosaccharomyces pombe (strain 972 / ATCC 24843) (Fission yeast).